A 488-amino-acid chain; its full sequence is Katanin p60 ATPase-containing subunit A-like 1 (488 aa).

An N-acetylmethionine modification is found at Met1. Positions Asp95 to Phe179 are disordered. Residues Pro116–Val127 show a composition bias toward basic and acidic residues. The span at Gly128–Ala138 shows a compositional bias: low complexity. Basic and acidic residues predominate over residues Ser142–Val167. Ser172 is modified (phosphoserine). Gly246–Thr253 contacts ATP.

Belongs to the AAA ATPase family. Katanin p60 subunit A1 subfamily. A-like 1 sub-subfamily. In terms of assembly, interacts with KATNB1 and KATNBL1. Widely expressed, including in testis, brain, heart, lung, kidney, liver, spleen, seminal vesicles and ovary. In testis, restricted to Sertoli cells within the seminiferous epithelium (at protein level).

It is found in the cytoplasm. The protein localises to the cytoskeleton. The protein resides in the spindle pole. It localises to the spindle. The catalysed reaction is n ATP + n H2O + a microtubule = n ADP + n phosphate + (n+1) alpha/beta tubulin heterodimers.. Its function is as follows. Regulates microtubule dynamics in Sertoli cells, a process that is essential for spermiogenesis and male fertility. Severs microtubules in an ATP-dependent manner, promoting rapid reorganization of cellular microtubule arrays. Has microtubule-severing activity in vitro. The protein is Katanin p60 ATPase-containing subunit A-like 1 (Katnal1) of Mus musculus (Mouse).